We begin with the raw amino-acid sequence, 513 residues long: Carotenoid isomerooxygenase (513 aa).

Residues His-184, His-242, His-312, and His-503 each contribute to the Fe cation site.

It belongs to the carotenoid oxygenase family. Requires Fe(2+) as cofactor.

It catalyses the reaction all-trans-zeaxanthin + O2 = (3R)-11-cis-3-hydroxyretinal + (3R)-all-trans-3-hydroxyretinal. It participates in cofactor metabolism; retinol metabolism. Functionally, catalyzes the oxidative cleavage at the 15,15'-double bond of carotenoids and the simultaneous all-trans to 11-cis isomerization of one cleavage product. Carotenoids like 11-cis retinal can promote visual pigment biogenesis in the dark. Essential for the biosynthesis of the 3-hydroxyretinal chromophore of rhodopsin from zeaxanthin and for proper photoreceptor development. This Galleria mellonella (Greater wax moth) protein is Carotenoid isomerooxygenase (ninaB).